Consider the following 475-residue polypeptide: Rho GTPase-activating protein 15 (475 aa).

The span at 1–22 (MQKSTNSDTSVETLNSTRQGTG) shows a compositional bias: polar residues. Residues 1–23 (MQKSTNSDTSVETLNSTRQGTGA) form a disordered region. Phosphoserine is present on residues S43, S103, S196, S199, and S243. Positions 79–189 (MVEKEGYLQK…WFHAIKNAID (111 aa)) constitute a PH domain. The Rho-GAP domain occupies 281–470 (SHLHKVCERE…LMLSEYSKIF (190 aa)).

Expressed in lung, liver and lymphoid cells.

Its subcellular location is the cytoplasm. The protein resides in the membrane. In terms of biological role, GTPase activator for the Rho-type GTPases by converting them to an inactive GDP-bound state. Has activity toward RAC1. Overexpression results in an increase in actin stress fibers and cell contraction. The sequence is that of Rho GTPase-activating protein 15 (ARHGAP15) from Homo sapiens (Human).